The following is a 360-amino-acid chain: Holliday junction branch migration complex subunit RuvB (360 aa).

Residues 4 to 196 (HEEDLDQAEE…FGFTAHLEFY (193 aa)) form a large ATPase domain (RuvB-L) region. Residues L35, R36, G77, K80, T81, T82, 143–145 (EDF), R186, Y196, and R233 contribute to the ATP site. A Mg(2+)-binding site is contributed by T81. Residues 197-267 (EPDELDLIVQ…VAQDALDLYE (71 aa)) are small ATPAse domain (RuvB-S). The tract at residues 270–360 (QLGLDRLDRG…PESDPPLFED (91 aa)) is head domain (RuvB-H). Positions 306, 325, and 330 each coordinate DNA.

This sequence belongs to the RuvB family. As to quaternary structure, homohexamer. Forms an RuvA(8)-RuvB(12)-Holliday junction (HJ) complex. HJ DNA is sandwiched between 2 RuvA tetramers; dsDNA enters through RuvA and exits via RuvB. An RuvB hexamer assembles on each DNA strand where it exits the tetramer. Each RuvB hexamer is contacted by two RuvA subunits (via domain III) on 2 adjacent RuvB subunits; this complex drives branch migration. In the full resolvosome a probable DNA-RuvA(4)-RuvB(12)-RuvC(2) complex forms which resolves the HJ.

The protein localises to the cytoplasm. It carries out the reaction ATP + H2O = ADP + phosphate + H(+). Functionally, the RuvA-RuvB-RuvC complex processes Holliday junction (HJ) DNA during genetic recombination and DNA repair, while the RuvA-RuvB complex plays an important role in the rescue of blocked DNA replication forks via replication fork reversal (RFR). RuvA specifically binds to HJ cruciform DNA, conferring on it an open structure. The RuvB hexamer acts as an ATP-dependent pump, pulling dsDNA into and through the RuvAB complex. RuvB forms 2 homohexamers on either side of HJ DNA bound by 1 or 2 RuvA tetramers; 4 subunits per hexamer contact DNA at a time. Coordinated motions by a converter formed by DNA-disengaged RuvB subunits stimulates ATP hydrolysis and nucleotide exchange. Immobilization of the converter enables RuvB to convert the ATP-contained energy into a lever motion, pulling 2 nucleotides of DNA out of the RuvA tetramer per ATP hydrolyzed, thus driving DNA branch migration. The RuvB motors rotate together with the DNA substrate, which together with the progressing nucleotide cycle form the mechanistic basis for DNA recombination by continuous HJ branch migration. Branch migration allows RuvC to scan DNA until it finds its consensus sequence, where it cleaves and resolves cruciform DNA. The protein is Holliday junction branch migration complex subunit RuvB of Nocardioides sp. (strain ATCC BAA-499 / JS614).